An 878-amino-acid polypeptide reads, in one-letter code: Valine--tRNA ligase (878 aa).

Positions 43-53 (PYPTGRLHLGH) match the 'HIGH' region motif. The short motif at 527–531 (KMSKS) is the 'KMSKS' region element. Residue K530 coordinates ATP.

The protein belongs to the class-I aminoacyl-tRNA synthetase family. ValS type 2 subfamily.

The protein localises to the cytoplasm. It catalyses the reaction tRNA(Val) + L-valine + ATP = L-valyl-tRNA(Val) + AMP + diphosphate. In terms of biological role, catalyzes the attachment of valine to tRNA(Val). As ValRS can inadvertently accommodate and process structurally similar amino acids such as threonine, to avoid such errors, it has a 'posttransfer' editing activity that hydrolyzes mischarged Thr-tRNA(Val) in a tRNA-dependent manner. In Methanocaldococcus jannaschii (strain ATCC 43067 / DSM 2661 / JAL-1 / JCM 10045 / NBRC 100440) (Methanococcus jannaschii), this protein is Valine--tRNA ligase.